A 123-amino-acid polypeptide reads, in one-letter code: Guanine nucleotide exchange factor MSS4 (123 aa).

The residue at position 1 (M1) is an N-acetylmethionine. Residues 9–123 (ELVSAEGRNR…YVALERVSHE (115 aa)) enclose the MSS4 domain. Zn(2+) is bound by residues C23, C26, C94, and C97.

The protein belongs to the DSS4/MSS4 family. In terms of assembly, interacts with RAB8A. As to expression, ubiquitous.

In terms of biological role, guanine-nucleotide-releasing protein that acts on members of the SEC4/YPT1/RAB subfamily. Stimulates GDP release from both YPT1, RAB3A and RAB10, but is less active on these proteins than on the SEC4 protein. Might play a general role in vesicular transport. In Rattus norvegicus (Rat), this protein is Guanine nucleotide exchange factor MSS4 (Rabif).